The following is a 345-amino-acid chain: Dihydroorotate dehydrogenase (quinone) (345 aa).

FMN-binding positions include 65–69 and Thr-89; that span reads AGLDK. Residue Lys-69 coordinates substrate. Residue 114 to 118 participates in substrate binding; sequence NRMGF. 2 residues coordinate FMN: Asn-142 and Asn-175. Residue Asn-175 participates in substrate binding. The Nucleophile role is filled by Ser-178. Residue Asn-180 participates in substrate binding. FMN is bound by residues Lys-220 and Thr-248. 249–250 is a binding site for substrate; the sequence is NT. Residues Gly-271, Gly-300, and 321–322 each bind FMN; that span reads YT.

The protein belongs to the dihydroorotate dehydrogenase family. Type 2 subfamily. Monomer. FMN serves as cofactor.

It is found in the cell membrane. It carries out the reaction (S)-dihydroorotate + a quinone = orotate + a quinol. Its pathway is pyrimidine metabolism; UMP biosynthesis via de novo pathway; orotate from (S)-dihydroorotate (quinone route): step 1/1. In terms of biological role, catalyzes the conversion of dihydroorotate to orotate with quinone as electron acceptor. The polypeptide is Dihydroorotate dehydrogenase (quinone) (Burkholderia ambifaria (strain ATCC BAA-244 / DSM 16087 / CCUG 44356 / LMG 19182 / AMMD) (Burkholderia cepacia (strain AMMD))).